Here is a 185-residue protein sequence, read N- to C-terminus: Peptidyl-tRNA hydrolase (185 aa).

Tyrosine 14 contributes to the tRNA binding site. Histidine 19 acts as the Proton acceptor in catalysis. TRNA contacts are provided by tyrosine 64, asparagine 66, and asparagine 112.

The protein belongs to the PTH family. In terms of assembly, monomer.

Its subcellular location is the cytoplasm. The catalysed reaction is an N-acyl-L-alpha-aminoacyl-tRNA + H2O = an N-acyl-L-amino acid + a tRNA + H(+). Its function is as follows. Hydrolyzes ribosome-free peptidyl-tRNAs (with 1 or more amino acids incorporated), which drop off the ribosome during protein synthesis, or as a result of ribosome stalling. Functionally, catalyzes the release of premature peptidyl moieties from peptidyl-tRNA molecules trapped in stalled 50S ribosomal subunits, and thus maintains levels of free tRNAs and 50S ribosomes. In Lactobacillus delbrueckii subsp. bulgaricus (strain ATCC 11842 / DSM 20081 / BCRC 10696 / JCM 1002 / NBRC 13953 / NCIMB 11778 / NCTC 12712 / WDCM 00102 / Lb 14), this protein is Peptidyl-tRNA hydrolase.